The chain runs to 202 residues: Nucleoside triphosphate pyrophosphatase (202 aa).

D79 acts as the Proton acceptor in catalysis.

This sequence belongs to the Maf family. A divalent metal cation is required as a cofactor.

The protein localises to the cytoplasm. It carries out the reaction a ribonucleoside 5'-triphosphate + H2O = a ribonucleoside 5'-phosphate + diphosphate + H(+). The catalysed reaction is a 2'-deoxyribonucleoside 5'-triphosphate + H2O = a 2'-deoxyribonucleoside 5'-phosphate + diphosphate + H(+). Functionally, nucleoside triphosphate pyrophosphatase. May have a dual role in cell division arrest and in preventing the incorporation of modified nucleotides into cellular nucleic acids. In Rhodopseudomonas palustris (strain BisB5), this protein is Nucleoside triphosphate pyrophosphatase.